Reading from the N-terminus, the 116-residue chain is Large ribosomal subunit protein uL18 (116 aa).

It belongs to the universal ribosomal protein uL18 family. As to quaternary structure, part of the 50S ribosomal subunit; part of the 5S rRNA/L5/L18/L25 subcomplex. Contacts the 5S and 23S rRNAs.

Its function is as follows. This is one of the proteins that bind and probably mediate the attachment of the 5S RNA into the large ribosomal subunit, where it forms part of the central protuberance. The protein is Large ribosomal subunit protein uL18 of Exiguobacterium sibiricum (strain DSM 17290 / CCUG 55495 / CIP 109462 / JCM 13490 / 255-15).